The following is a 591-amino-acid chain: MKKISLPKIGIRPVIDGRRMGVRESLEAQTMNMAKATAALISEKLRHACGARVECVIADTCIAGMAESAACEEKFSSQNVGVTITVTPCWCYGSETIDMDPLRPKAIWGFNGTERPGAVYLAAALAAHSQKGIPAFSIYGHDVQDADDTSIPADVEEKLLRFARAGLAVASMKGKSYLSLGGVSMGIAGSIVDHNFFESWLGMKVQAVDMTELRRRIDQKIYDETELEMALAWADKHFRYGEDQNAEQYKRNETQSRAVLKESLLMAMCIRDMMQGNPKLAEKGLVEESLGYNAIAAGFQGQRHWTDQYPNGDTAEALLNSSFDWNGVREPFVVATENDSLNGVAMLMGHQLTGTAQVFADVRTYWSPDAVERVTGQPLTGRAEHGIIHLINSGSAALDGSCQQRDAQGNPTMKPHWEIEQSEADACLAATEWCPAIHEYFRGGGFSSRFLTEGGVPFTMTRVNIIKGLGPVLQIAEGWSVALPKAMHDQLDARTNSTWPTTWFAPRLTGKGPFSDVYSVMANWGANHGVLTIGHVGADFITLAAMLRIPVCMHNVEEAKIYRPSAWAAHGMDIEGQDYRACQNYGPLYKR.

Active-site proton acceptor residues include Glu-337 and Asp-361. Residues Glu-337, Asp-361, and His-528 each coordinate Mn(2+).

It belongs to the L-fucose isomerase family. Homohexamer. The cofactor is Mn(2+).

The protein localises to the cytoplasm. It catalyses the reaction L-fucose = L-fuculose. The protein operates within carbohydrate degradation; L-fucose degradation; L-lactaldehyde and glycerone phosphate from L-fucose: step 1/3. Its function is as follows. Converts the aldose L-fucose into the corresponding ketose L-fuculose. This Klebsiella pneumoniae subsp. pneumoniae (strain ATCC 700721 / MGH 78578) protein is L-fucose isomerase.